Here is a 415-residue protein sequence, read N- to C-terminus: Serine/threonine transporter SstT (415 aa).

A run of 8 helical transmembrane segments spans residues 23–43, 47–67, 85–105, 144–164, 181–201, 220–240, 293–313, and 333–353; these read ILIGLVLGVLLALVSKPAAIA, LGTLFVGALKAVAPVLVLMLV, ILFLYLLGTFSAALTAVLFSF, ALLNANYIGILVWAVGLGFAL, AVTFIVKVVIRFAPLGIFGLV, LLVLVGCMLLVALVINPLLVF, IPLGATINMAGAAITITVLTL, and VVASLCACGASGVAGGSLLLI.

It belongs to the dicarboxylate/amino acid:cation symporter (DAACS) (TC 2.A.23) family.

It localises to the cell inner membrane. The catalysed reaction is L-serine(in) + Na(+)(in) = L-serine(out) + Na(+)(out). It carries out the reaction L-threonine(in) + Na(+)(in) = L-threonine(out) + Na(+)(out). Functionally, involved in the import of serine and threonine into the cell, with the concomitant import of sodium (symport system). The polypeptide is Serine/threonine transporter SstT (Klebsiella pneumoniae subsp. pneumoniae (strain ATCC 700721 / MGH 78578)).